The following is a 422-amino-acid chain: Testin (422 aa).

Residues 92–199 (MILTSPVAAK…GDVKLPKEVE (108 aa)) form the PET domain. Residues 135 to 165 (QPVAGSEGAQYRKKQLAKQLPAHDQDPSKCH) are disordered. The span at 155–165 (PAHDQDPSKCH) shows a compositional bias: basic and acidic residues. 3 consecutive LIM zinc-binding domains span residues 234-299 (YYCF…SEKP), 300-359 (RCAG…NHAV), and 360-422 (SCQG…KMSS).

It belongs to the prickle / espinas / testin family. As to expression, expressed in the animal hemisphere at the 4-cell stage. By stage 18, expressed in cells adjacent to the anterior neural plate. In late neurula, expressed in the cranial neural crest. At tail bud stages, expressed strongly in the head, ventral to the developing eye, branchial arches and lateral line placodes. Also localized in the otic vesicle, dorsal fin and notochord with weaker expression at intersomitic junctions of tail bud embryos.

It localises to the cytoplasm. It is found in the cell cortex. The protein resides in the cell junction. Its subcellular location is the focal adhesion. Scaffold protein that may play a role in cell adhesion, cell spreading and in the reorganization of the actin cytoskeleton. May inhibit cell growth. Regulates cranial neural crest migration. Acts together with prickle1 to control axial elongation. This is Testin from Xenopus laevis (African clawed frog).